The sequence spans 273 residues: Aspartate/glutamate leucyltransferase (273 aa).

Belongs to the R-transferase family. Bpt subfamily.

It is found in the cytoplasm. It carries out the reaction N-terminal L-glutamyl-[protein] + L-leucyl-tRNA(Leu) = N-terminal L-leucyl-L-glutamyl-[protein] + tRNA(Leu) + H(+). It catalyses the reaction N-terminal L-aspartyl-[protein] + L-leucyl-tRNA(Leu) = N-terminal L-leucyl-L-aspartyl-[protein] + tRNA(Leu) + H(+). Its function is as follows. Functions in the N-end rule pathway of protein degradation where it conjugates Leu from its aminoacyl-tRNA to the N-termini of proteins containing an N-terminal aspartate or glutamate. This is Aspartate/glutamate leucyltransferase from Ruegeria pomeroyi (strain ATCC 700808 / DSM 15171 / DSS-3) (Silicibacter pomeroyi).